The sequence spans 254 residues: uncharacterized protein (254 aa).

Isoleucine 18, serine 37, aspartate 63, asparagine 90, tyrosine 159, lysine 163, valine 192, and threonine 194 together coordinate NADP(+). The Proton donor role is filled by tyrosine 159. Lysine 163 (lowers pKa of active site Tyr) is an active-site residue.

This sequence belongs to the short-chain dehydrogenases/reductases (SDR) family.

It is found in the cytoplasm. It localises to the nucleus. This is an uncharacterized protein from Schizosaccharomyces pombe (strain 972 / ATCC 24843) (Fission yeast).